Reading from the N-terminus, the 137-residue chain is Large ribosomal subunit protein uL16 (137 aa).

It belongs to the universal ribosomal protein uL16 family. As to quaternary structure, part of the 50S ribosomal subunit.

Its function is as follows. Binds 23S rRNA and is also seen to make contacts with the A and possibly P site tRNAs. The sequence is that of Large ribosomal subunit protein uL16 from Mesoplasma florum (strain ATCC 33453 / NBRC 100688 / NCTC 11704 / L1) (Acholeplasma florum).